We begin with the raw amino-acid sequence, 599 residues long: Aspartate--tRNA(Asp/Asn) ligase (599 aa).

Glu-172 contributes to the L-aspartate binding site. Residues 196 to 199 (QLFK) form an aspartate region. Residue Arg-218 coordinates L-aspartate. ATP-binding positions include 218 to 220 (RDE) and Gln-227. His-455 contributes to the L-aspartate binding site. Glu-489 contacts ATP. Arg-496 is a binding site for L-aspartate. 541 to 544 (GLDR) is an ATP binding site.

This sequence belongs to the class-II aminoacyl-tRNA synthetase family. Type 1 subfamily. In terms of assembly, homodimer.

Its subcellular location is the cytoplasm. The catalysed reaction is tRNA(Asx) + L-aspartate + ATP = L-aspartyl-tRNA(Asx) + AMP + diphosphate. Functionally, aspartyl-tRNA synthetase with relaxed tRNA specificity since it is able to aspartylate not only its cognate tRNA(Asp) but also tRNA(Asn). Reaction proceeds in two steps: L-aspartate is first activated by ATP to form Asp-AMP and then transferred to the acceptor end of tRNA(Asp/Asn). This Herminiimonas arsenicoxydans protein is Aspartate--tRNA(Asp/Asn) ligase.